We begin with the raw amino-acid sequence, 199 residues long: Recombination protein RecR (199 aa).

The C4-type zinc-finger motif lies at 58–73 (CKTCGNIDTQSPCTVC). The Toprim domain occupies 81 to 176 (AMIVVVADVA…KVTRLAHGVP (96 aa)).

This sequence belongs to the RecR family.

May play a role in DNA repair. It seems to be involved in an RecBC-independent recombinational process of DNA repair. It may act with RecF and RecO. The polypeptide is Recombination protein RecR (Bradyrhizobium sp. (strain ORS 278)).